The sequence spans 368 residues: tRNA/tmRNA (uracil-C(5))-methyltransferase (368 aa).

5 residues coordinate S-adenosyl-L-methionine: glutamine 192, tyrosine 220, asparagine 225, glutamate 241, and aspartate 301. Cysteine 326 acts as the Nucleophile in catalysis. Glutamate 360 serves as the catalytic Proton acceptor.

The protein belongs to the class I-like SAM-binding methyltransferase superfamily. RNA M5U methyltransferase family. TrmA subfamily.

It carries out the reaction uridine(54) in tRNA + S-adenosyl-L-methionine = 5-methyluridine(54) in tRNA + S-adenosyl-L-homocysteine + H(+). The catalysed reaction is uridine(341) in tmRNA + S-adenosyl-L-methionine = 5-methyluridine(341) in tmRNA + S-adenosyl-L-homocysteine + H(+). Its function is as follows. Dual-specificity methyltransferase that catalyzes the formation of 5-methyluridine at position 54 (m5U54) in all tRNAs, and that of position 341 (m5U341) in tmRNA (transfer-mRNA). The chain is tRNA/tmRNA (uracil-C(5))-methyltransferase from Actinobacillus pleuropneumoniae serotype 5b (strain L20).